Here is a 772-residue protein sequence, read N- to C-terminus: Cadherin-19 (772 aa).

Positions 1–21 are cleaved as a signal peptide; that stretch reads MNCYLLLRFMLGIPLLWPCLG. A propeptide spanning residues 22–43 is cleaved from the precursor; that stretch reads ATENSQTKKVKQPVRSHLRVKR. Cadherin domains are found at residues 44–148, 149–256, 257–370, 371–470, and 470–581; these read GWVW…EPKF, LDEP…KPIF, KESL…PPLF, LLPY…APEF, and FSQY…STQT. Residues 44–596 lie on the Extracellular side of the membrane; the sequence is GWVWNQFFVP…LVLSMGFKTE (553 aa). N-linked (GlcNAc...) asparagine glycans are attached at residues asparagine 57 and asparagine 74. Asparagine 419, asparagine 437, asparagine 508, asparagine 515, asparagine 516, and asparagine 534 each carry an N-linked (GlcNAc...) asparagine glycan. The helical transmembrane segment at 597–617 threads the bilayer; it reads VIIAILICIMIIFGFIFLTLG. Topologically, residues 618–772 are cytoplasmic; the sequence is LKQRRKQILF…MFGSAVQSNN (155 aa).

In terms of tissue distribution, expressed in many tissues, with the exception of uterus.

Its subcellular location is the cell membrane. In terms of biological role, cadherins are calcium-dependent cell adhesion proteins. They preferentially interact with themselves in a homophilic manner in connecting cells; cadherins may thus contribute to the sorting of heterogeneous cell types. This is Cadherin-19 (CDH19) from Homo sapiens (Human).